We begin with the raw amino-acid sequence, 754 residues long: Subtilisin-like protease SBT3.12 (754 aa).

The N-terminal stretch at 1 to 28 (MGIVKGRSRAGLFIGFLFIVNVGFCVFA) is a signal peptide. Residues 29–117 (QESSNEERKI…VAPNRKVELQ (89 aa)) constitute a propeptide, activation peptide. The Inhibitor I9 domain occupies 39-116 (YVVHLGVRRH…SVAPNRKVEL (78 aa)). One can recognise a Peptidase S8 domain in the interval 121–606 (IYDYLGLSPS…AGLVNAERAK (486 aa)). Aspartate 151 acts as the Charge relay system in catalysis. The N-linked (GlcNAc...) asparagine glycan is linked to asparagine 206. Histidine 224 serves as the catalytic Charge relay system. 2 N-linked (GlcNAc...) asparagine glycosylation sites follow: asparagine 239 and asparagine 369. The active-site Charge relay system is the serine 537. N-linked (GlcNAc...) asparagine glycans are attached at residues asparagine 629 and asparagine 740.

This sequence belongs to the peptidase S8 family.

The protein localises to the secreted. This is Subtilisin-like protease SBT3.12 from Arabidopsis thaliana (Mouse-ear cress).